We begin with the raw amino-acid sequence, 385 residues long: Probable di-N-acetylchitobiase 2 (385 aa).

Positions 1–15 (MRIILLLFLIVFVVA) are cleaved as a signal peptide. Residues 16–377 (QSSSSSSSSG…DALASFFPQS (362 aa)) enclose the GH18 domain. Asparagine 51 and asparagine 101 each carry an N-linked (GlcNAc...) asparagine glycan. Residue glutamate 129 is the Proton donor of the active site. 3 N-linked (GlcNAc...) asparagine glycosylation sites follow: asparagine 223, asparagine 272, and asparagine 296.

Belongs to the glycosyl hydrolase 18 family.

The protein localises to the lysosome. Involved in the degradation of asparagine-linked glycoproteins. May hydrolyze of N-acetyl-beta-D-glucosamine (1-4)N-acetylglucosamine chitobiose core from the reducing end of the bond. This is Probable di-N-acetylchitobiase 2 (ctbs2) from Dictyostelium discoideum (Social amoeba).